The sequence spans 302 residues: Stanniocalcin-2 (302 aa).

A signal peptide spans 1–24; it reads MCAERLGQFMTLALVLATFDPARG. Positions 23 to 44 are disordered; the sequence is RGTDATNPPEGPQDRSSQQKGR. N-linked (GlcNAc...) asparagine glycosylation occurs at Asn73. Residues 217 to 302 form a disordered region; sequence KPPTAPPERQ…EQSEYSDIRR (86 aa). Over residues 227-264 the composition is skewed to basic and acidic residues; that stretch reads PQVDRTKLSRAHHGEAGHHLPEPSSRETGRGAKGERGS. Residues Ser250 and Ser251 each carry the phosphoserine; by FAM20C modification. Thr254 is modified (phosphothreonine; by FAM20C).

This sequence belongs to the stanniocalcin family. In terms of assembly, homodimer; disulfide-linked. As to expression, expressed in a variety of tissues including muscle, heart, pancreas, kidney, spleen, prostate, small intestine, colon and peripheral blood leukocytes.

It is found in the secreted. Functionally, has an anti-hypocalcemic action on calcium and phosphate homeostasis. This Homo sapiens (Human) protein is Stanniocalcin-2 (STC2).